The primary structure comprises 579 residues: Mycobactin import ATP-binding/permease protein IrtB (579 aa).

Over 1-25 (MIRTLLRLVPAEKRGAVAGYAVLTL) the chain is Cytoplasmic. Residues 21–299 (AVLTLLSVLL…IADLAPALET (279 aa)) form the ABC transmembrane type-1 domain. The helical transmembrane segment at 26-46 (LSVLLRAVGAVLLIPLLAALF) threads the bilayer. Residues 47 to 48 (SD) are Periplasmic-facing. Residues 49 to 69 (TPSDAWLWLGWLTAVTLAGWV) form a helical membrane-spanning segment. Over 70–126 (TDTNTARLGFDLGFAVLSRTQHDMADRLPNVAMSWFTPDNTATARQAIAATGPELAG) the chain is Cytoplasmic. Transmembrane regions (helical) follow at residues 127 to 147 (LVVN…AIGV) and 148 to 168 (ALLF…AVLF). At 169–241 (GALALSGRLS…RLLTMQIPGQ (73 aa)) the chain is on the cytoplasmic side. Residues 242–262 (VLFSLAGQVALIGFAGMAVWL) traverse the membrane as a helical segment. Residues 263–272 (TVRGQLGVPE) are Periplasmic-facing. A helical transmembrane segment spans residues 273–293 (AIALIVVLVRYLEPFAAIADL). The Cytoplasmic portion of the chain corresponds to 294-579 (APALETTRAT…SEWAIGSTAR (286 aa)). The 234-residue stretch at 332-565 (IEFDDVRFSY…GGRFAQFWAQ (234 aa)) folds into the ABC transporter domain. ATP is bound at residue 364–371 (GPSGSGKT).

The protein belongs to the ABC transporter superfamily. Siderophore-Fe(3+) uptake transporter (SIUT) (TC 3.A.1.21) family. In terms of assembly, forms a heterodimer with IrtA.

It is found in the cell inner membrane. With respect to regulation, the ATPase activity of IrtAB is stimulated more than 38-fold in the presence of Fe-MBT, and more than 10-fold in the presence of Fe-cMBT. Its function is as follows. Part of the ABC transporter complex IrtAB involved in the import of iron-bound mycobactin (Fe-MBT) and carboxymycobactin (Fe-cMBT). Has a preference for Fe-MBT over Fe-cMBT. Transmembrane domains (TMD) form a pore in the membrane and the ATP-binding domain (NBD) is responsible for energy generation. The polypeptide is Mycobactin import ATP-binding/permease protein IrtB (Mycolicibacterium thermoresistibile (strain ATCC 19527 / DSM 44167 / CIP 105390 / JCM 6362 / NCTC 10409 / 316) (Mycobacterium thermoresistibile)).